Reading from the N-terminus, the 240-residue chain is Uridylate kinase (240 aa).

12 to 15 (KLSG) is a binding site for ATP. Residues 20 to 25 (GSQGFG) are involved in allosteric activation by GTP. Position 54 (G54) interacts with UMP. The ATP site is built by G55 and R59. Residues D74 and 135-142 (TGNPYFST) contribute to the UMP site. Residues Y168 and D171 each coordinate ATP.

Belongs to the UMP kinase family. As to quaternary structure, homohexamer.

It is found in the cytoplasm. It carries out the reaction UMP + ATP = UDP + ADP. The protein operates within pyrimidine metabolism; CTP biosynthesis via de novo pathway; UDP from UMP (UMPK route): step 1/1. Allosterically activated by GTP. Inhibited by UTP. Catalyzes the reversible phosphorylation of UMP to UDP. The protein is Uridylate kinase of Desulfitobacterium hafniense (strain Y51).